We begin with the raw amino-acid sequence, 338 residues long: tRNA N6-adenosine threonylcarbamoyltransferase (338 aa).

Histidine 111 and histidine 115 together coordinate Fe cation. Substrate contacts are provided by residues 134 to 138, aspartate 167, glycine 180, and asparagine 275; that span reads LLSGG. Aspartate 304 contributes to the Fe cation binding site.

Belongs to the KAE1 / TsaD family. Requires Fe(2+) as cofactor.

It localises to the cytoplasm. The catalysed reaction is L-threonylcarbamoyladenylate + adenosine(37) in tRNA = N(6)-L-threonylcarbamoyladenosine(37) in tRNA + AMP + H(+). Its function is as follows. Required for the formation of a threonylcarbamoyl group on adenosine at position 37 (t(6)A37) in tRNAs that read codons beginning with adenine. Is involved in the transfer of the threonylcarbamoyl moiety of threonylcarbamoyl-AMP (TC-AMP) to the N6 group of A37, together with TsaE and TsaB. TsaD likely plays a direct catalytic role in this reaction. The chain is tRNA N6-adenosine threonylcarbamoyltransferase from Leptospira interrogans serogroup Icterohaemorrhagiae serovar copenhageni (strain Fiocruz L1-130).